The following is a 358-amino-acid chain: Type II restriction enzyme HpaII (358 aa).

In terms of assembly, homodimer.

The catalysed reaction is Endonucleolytic cleavage of DNA to give specific double-stranded fragments with terminal 5'-phosphates.. An E and P subtype restriction enzyme that recognizes the double-stranded sequence 5'-CCGG-3' and cleaves after C-1. The polypeptide is Type II restriction enzyme HpaII (Haemophilus parainfluenzae).